Consider the following 422-residue polypeptide: Histidine--tRNA ligase (422 aa).

Belongs to the class-II aminoacyl-tRNA synthetase family. As to quaternary structure, homodimer.

Its subcellular location is the cytoplasm. The catalysed reaction is tRNA(His) + L-histidine + ATP = L-histidyl-tRNA(His) + AMP + diphosphate + H(+). In Syntrophomonas wolfei subsp. wolfei (strain DSM 2245B / Goettingen), this protein is Histidine--tRNA ligase.